Consider the following 220-residue polypeptide: Cell division protein DedD (220 aa).

Residues 9–29 (LVGTIVLVALGVIVLPGLLDG) traverse the membrane as a helical segment. Disordered stretches follow at residues 46-84 (KAGD…AAPS) and 97-137 (FEPE…EEKA). The segment covering 57–70 (PAATQALPTQPPEG) has biased composition (low complexity). The segment covering 100–109 (EPAPVAPPKP) has biased composition (pro residues). Composition is skewed to basic and acidic residues over residues 110-119 (KPVEPPKPKV) and 127-137 (PEPKPVVEEKA). The region spanning 138-217 (APTGKAYVVQ…SGLSGVVMGY (80 aa)) is the SPOR domain.

This sequence belongs to the DedD family.

The protein localises to the cell inner membrane. Non-essential cell division protein that could be required for efficient cell constriction. In Escherichia coli (strain K12), this protein is Cell division protein DedD.